Reading from the N-terminus, the 300-residue chain is Cation-efflux pump FieF (300 aa).

6 helical membrane passes run 12–32, 39–59, 82–102, 114–134, 151–171, and 172–192; these read AAIAATAMASLLLLIKIFAWW, ILAALVDSLVDIGASLTNLLV, AALAQSMFISGSALFLFLTGI, PGVGIIVTIVALVCTILLVSF, MLHYQSDVMMNGAILLALALS, and WYGWHSADALFALGIGIYILY. Residues Asp-45 and Asp-49 each contribute to the Zn(2+) site. Zn(2+)-binding residues include His-153 and Asp-157.

Belongs to the cation diffusion facilitator (CDF) transporter (TC 2.A.4) family. FieF subfamily. In terms of assembly, homodimer.

It localises to the cell inner membrane. The catalysed reaction is Zn(2+)(in) + H(+)(out) = Zn(2+)(out) + H(+)(in). It carries out the reaction Cd(2+)(in) + H(+)(out) = Cd(2+)(out) + H(+)(in). The enzyme catalyses Fe(2+)(in) + H(+)(out) = Fe(2+)(out) + H(+)(in). Divalent metal cation transporter which exports Zn(2+), Cd(2+) and possibly Fe(2+). May be involved in zinc and iron detoxification by efflux. The polypeptide is Cation-efflux pump FieF (Escherichia fergusonii (strain ATCC 35469 / DSM 13698 / CCUG 18766 / IAM 14443 / JCM 21226 / LMG 7866 / NBRC 102419 / NCTC 12128 / CDC 0568-73)).